Consider the following 139-residue polypeptide: Interleukin-5 (139 aa).

The N-terminal stretch at 1-19 is a signal peptide; that stretch reads MMKILVCLPLLTLYAGCVY. Residues asparagine 48, asparagine 77, and asparagine 91 are each glycosylated (N-linked (GlcNAc...) asparagine).

Belongs to the IL-5 family. In terms of assembly, homodimer; disulfide-linked. Interacts with IL5RA. Interacts with CSF2RB.

Its subcellular location is the secreted. Its function is as follows. Homodimeric cytokine expressed predominantly by T-lymphocytes and NK cells that plays an important role in the survival, differentiation, and chemotaxis of eosinophils. Also acts on activated and resting B-cells to induce immunoglobulin production, growth, and differentiation. Mechanistically, exerts its biological effects through a receptor composed of IL5RA subunit and the cytokine receptor common subunit beta/CSF2RB. Binding to the receptor leads to activation of various kinases including LYN, SYK and JAK2 and thereby propagates signals through the RAS-MAPK and JAK-STAT5 pathways respectively. The sequence is that of Interleukin-5 (IL5) from Notamacropus eugenii (Tammar wallaby).